We begin with the raw amino-acid sequence, 441 residues long: tRNA modification GTPase MnmE (441 aa).

Positions 22, 80, and 118 each coordinate (6S)-5-formyl-5,6,7,8-tetrahydrofolate. Residues 213-366 (GIYIAIVGEP…LLNLIKQRVE (154 aa)) enclose the TrmE-type G domain. Residues 223–228 (NSGKST), 242–248 (SEYAGTT), and 267–270 (DTAG) each bind GTP. Positions 227 and 248 each coordinate Mg(2+). Lys-441 contributes to the (6S)-5-formyl-5,6,7,8-tetrahydrofolate binding site.

The protein belongs to the TRAFAC class TrmE-Era-EngA-EngB-Septin-like GTPase superfamily. TrmE GTPase family. In terms of assembly, homodimer. Heterotetramer of two MnmE and two MnmG subunits. K(+) is required as a cofactor.

The protein localises to the cytoplasm. Its function is as follows. Exhibits a very high intrinsic GTPase hydrolysis rate. Involved in the addition of a carboxymethylaminomethyl (cmnm) group at the wobble position (U34) of certain tRNAs, forming tRNA-cmnm(5)s(2)U34. The protein is tRNA modification GTPase MnmE of Ehrlichia canis (strain Jake).